A 506-amino-acid chain; its full sequence is 5-OH-xanthotoxin synthase (506 aa).

A helical transmembrane segment spans residues Pro3–His23. Residues Thr365–Ile370 form a substrate specificity region. Residue Cys446 participates in heme binding.

It belongs to the cytochrome P450 family. Requires heme as cofactor.

The protein resides in the microsome membrane. It carries out the reaction xanthotoxin + reduced [NADPH--hemoprotein reductase] + O2 = 5-hydroxyxanthotoxin + oxidized [NADPH--hemoprotein reductase] + H2O + 2 H(+). It participates in secondary metabolite biosynthesis. In terms of biological role, involved in the biosynthesis of coumarins and furanocoumarins (FCs), natural products required for defense responses against attacks by predators with potential medical and agroindustrial usages such as anticoagulant, rodenticide and artificial vanilla substitutes. Catalyzes the conversion of xanthotoxin into 5-hydroxyxanthotoxin. In Pastinaca sativa (Wild parsnip), this protein is 5-OH-xanthotoxin synthase.